The primary structure comprises 391 residues: Acetate kinase (391 aa).

Asparagine 7 lines the Mg(2+) pocket. Lysine 14 contributes to the ATP binding site. Arginine 88 is a substrate binding site. Aspartate 145 functions as the Proton donor/acceptor in the catalytic mechanism. ATP is bound by residues 203–207 (HAGNG), 278–280 (DAR), and 326–330 (GMGEN). Glutamate 378 is a Mg(2+) binding site.

Belongs to the acetokinase family. Homodimer. Mg(2+) serves as cofactor. Mn(2+) is required as a cofactor.

The protein resides in the cytoplasm. The catalysed reaction is acetate + ATP = acetyl phosphate + ADP. Its pathway is metabolic intermediate biosynthesis; acetyl-CoA biosynthesis; acetyl-CoA from acetate: step 1/2. Functionally, catalyzes the formation of acetyl phosphate from acetate and ATP. Can also catalyze the reverse reaction. This chain is Acetate kinase, found in Phytoplasma mali (strain AT).